The following is a 264-amino-acid chain: S-adenosylmethionine decarboxylase proenzyme (264 aa).

Catalysis depends on serine 112, which acts as the Schiff-base intermediate with substrate; via pyruvic acid. Position 112 is a pyruvic acid (Ser); by autocatalysis (serine 112). Histidine 117 functions as the Proton acceptor; for processing activity in the catalytic mechanism. Cysteine 140 serves as the catalytic Proton donor; for catalytic activity.

Belongs to the prokaryotic AdoMetDC family. Type 2 subfamily. In terms of assembly, heterooctamer of four alpha and four beta chains arranged as a tetramer of alpha/beta heterodimers. The cofactor is pyruvate. Is synthesized initially as an inactive proenzyme. Formation of the active enzyme involves a self-maturation process in which the active site pyruvoyl group is generated from an internal serine residue via an autocatalytic post-translational modification. Two non-identical subunits are generated from the proenzyme in this reaction, and the pyruvate is formed at the N-terminus of the alpha chain, which is derived from the carboxyl end of the proenzyme. The post-translation cleavage follows an unusual pathway, termed non-hydrolytic serinolysis, in which the side chain hydroxyl group of the serine supplies its oxygen atom to form the C-terminus of the beta chain, while the remainder of the serine residue undergoes an oxidative deamination to produce ammonia and the pyruvoyl group blocking the N-terminus of the alpha chain.

It catalyses the reaction S-adenosyl-L-methionine + H(+) = S-adenosyl 3-(methylsulfanyl)propylamine + CO2. The protein operates within amine and polyamine biosynthesis; S-adenosylmethioninamine biosynthesis; S-adenosylmethioninamine from S-adenosyl-L-methionine: step 1/1. Catalyzes the decarboxylation of S-adenosylmethionine to S-adenosylmethioninamine (dcAdoMet), the propylamine donor required for the synthesis of the polyamines spermine and spermidine from the diamine putrescine. This is S-adenosylmethionine decarboxylase proenzyme from Salmonella arizonae (strain ATCC BAA-731 / CDC346-86 / RSK2980).